The primary structure comprises 133 residues: Large ribosomal subunit protein uL22 (133 aa).

This sequence belongs to the universal ribosomal protein uL22 family. As to quaternary structure, part of the 50S ribosomal subunit.

In terms of biological role, this protein binds specifically to 23S rRNA; its binding is stimulated by other ribosomal proteins, e.g. L4, L17, and L20. It is important during the early stages of 50S assembly. It makes multiple contacts with different domains of the 23S rRNA in the assembled 50S subunit and ribosome. Its function is as follows. The globular domain of the protein is located near the polypeptide exit tunnel on the outside of the subunit, while an extended beta-hairpin is found that lines the wall of the exit tunnel in the center of the 70S ribosome. The protein is Large ribosomal subunit protein uL22 of Borrelia garinii subsp. bavariensis (strain ATCC BAA-2496 / DSM 23469 / PBi) (Borreliella bavariensis).